Here is a 296-residue protein sequence, read N- to C-terminus: Bifunctional protein FolD (296 aa).

NADP(+) contacts are provided by residues 166–168 (GRS), Ser-191, and Ile-232.

This sequence belongs to the tetrahydrofolate dehydrogenase/cyclohydrolase family. In terms of assembly, homodimer.

The catalysed reaction is (6R)-5,10-methylene-5,6,7,8-tetrahydrofolate + NADP(+) = (6R)-5,10-methenyltetrahydrofolate + NADPH. It carries out the reaction (6R)-5,10-methenyltetrahydrofolate + H2O = (6R)-10-formyltetrahydrofolate + H(+). Its pathway is one-carbon metabolism; tetrahydrofolate interconversion. Catalyzes the oxidation of 5,10-methylenetetrahydrofolate to 5,10-methenyltetrahydrofolate and then the hydrolysis of 5,10-methenyltetrahydrofolate to 10-formyltetrahydrofolate. This is Bifunctional protein FolD from Cereibacter sphaeroides (strain ATCC 17029 / ATH 2.4.9) (Rhodobacter sphaeroides).